Consider the following 798-residue polypeptide: Palmitoyl thioesterase CPT1C (798 aa).

Residues 1-52 (MAEAHQASSLLSSLSSDGAEVELSSPVWQEIYLCALRSWKRHLWRVWNDFLA) are Cytoplasmic-facing. A helical membrane pass occupies residues 53–75 (GVVPATPLSWLFLFSTIQLACLL). At 76–103 (QLDPSLGLMEKIKELLPDWGGQHHQLQG) the chain is on the lumenal side. Residues 104 to 126 (FLSAAVFASCLWGALIFTLHVAL) form a helical membrane-spanning segment. Residues 127 to 798 (RLLLSHHGWL…PNTPTSSTNL (672 aa)) lie on the Cytoplasmic side of the membrane. Histidine 469 functions as the Proton acceptor in the catalytic mechanism. Residue 551 to 563 (GKSFIKCCHVSSD) participates in CoA binding. Positions 585, 587, and 598 each coordinate (R)-carnitine. The interval 759-798 (LFRVGQHFKRQFRGENSDYRYNFLSCKTVDPNTPTSSTNL) is required for interaction with GRIA1.

The protein belongs to the carnitine/choline acetyltransferase family. Peripherally associated with AMPAR complex. AMPAR complex consists of an inner core made of 4 pore-forming GluA/GRIA proteins (GRIA1, GRIA2, GRIA3 and GRIA4) and 4 major auxiliary subunits arranged in a twofold symmetry. One of the two pairs of distinct binding sites is occupied either by CNIH2, CNIH3 or CACNG2, CACNG3. The other harbors CACNG2, CACNG3, CACNG4, CACNG8 or GSG1L. This inner core of AMPAR complex is complemented by outer core constituents binding directly to the GluA/GRIA proteins at sites distinct from the interaction sites of the inner core constituents. Outer core constituents include at least PRRT1, PRRT2, CKAMP44/SHISA9, FRRS1L and NRN1. The proteins of the inner and outer core serve as a platform for other, more peripherally associated AMPAR constituents, including CPT1C. Alone or in combination, these auxiliary subunits control the gating and pharmacology of the AMPAR complex and profoundly impact their biogenesis and protein processing. Interacts with SACM1L; the interaction regulates SACM1L phosphatidylinositol-3-phosphatase activity and translocation to endoplasmic reticulum/trans Golgi network in a malonyl-CoA dependent manner. Interacts with ATL1. In terms of tissue distribution, predominantly expressed in brain (at protein level) and testis, highly expressed in the hippocampus, amygdala and cerebellum. Expressed in neurons but not astrocytes. Expressed in the ventral horn from spinal cords.

It is found in the synapse. Its subcellular location is the cell projection. The protein localises to the axon. The protein resides in the dendrite. It localises to the dendritic spine. It is found in the endoplasmic reticulum membrane. The enzyme catalyses S-hexadecanoyl-L-cysteinyl-[protein] + H2O = L-cysteinyl-[protein] + hexadecanoate + H(+). In terms of biological role, palmitoyl thioesterase specifically expressed in the endoplasmic reticulum of neurons. Modulates the trafficking of the glutamate receptor, AMPAR, to plasma membrane through depalmitoylation of GRIA1. Also regulates AMPR trafficking through the regulation of SACM1L phosphatidylinositol-3-phosphatase activity by interaction in a malonyl-CoA dependent manner. Binds malonyl-CoA and couples malonyl-CoA to ceramide levels, necessary for proper spine maturation and contributing to systemic energy homeostasis and appetite control. Binds to palmitoyl-CoA, but does not have carnitine palmitoyltransferase 1 catalytic activity or at very low levels. This chain is Palmitoyl thioesterase CPT1C (Cpt1c), found in Mus musculus (Mouse).